Here is a 155-residue protein sequence, read N- to C-terminus: Ribonuclease H (155 aa).

One can recognise an RNase H type-1 domain in the interval 9-150 (DGQQVEMWTD…ADALANQGME (142 aa)). Mg(2+) is bound by residues aspartate 18, glutamate 56, aspartate 78, and aspartate 142.

This sequence belongs to the RNase H family. As to quaternary structure, monomer. It depends on Mg(2+) as a cofactor.

The protein resides in the cytoplasm. It catalyses the reaction Endonucleolytic cleavage to 5'-phosphomonoester.. Its function is as follows. Endonuclease that specifically degrades the RNA of RNA-DNA hybrids. The sequence is that of Ribonuclease H from Bordetella pertussis (strain Tohama I / ATCC BAA-589 / NCTC 13251).